The chain runs to 476 residues: Probable periplasmic serine endoprotease DegP-like (476 aa).

Residues 1-27 form the signal peptide; sequence MSIPRLKSYFTILATVLVLGQAVSAQA. Active-site charge relay system residues include His-116, Asp-146, and Ser-219. Substrate contacts are provided by residues 217-219 and 274-278; these read GNS and LGVVI. PDZ domains lie at 263–354 and 360–465; these read LKTG…IRDG and ELTV…LRQG.

This sequence belongs to the peptidase S1C family.

The protein resides in the periplasm. The enzyme catalyses Acts on substrates that are at least partially unfolded. The cleavage site P1 residue is normally between a pair of hydrophobic residues, such as Val-|-Val.. Might be efficient in the degradation of transiently denatured and unfolded proteins which accumulate in the periplasm following stress conditions. This is Probable periplasmic serine endoprotease DegP-like (mucD) from Pseudomonas fluorescens (strain ATCC BAA-477 / NRRL B-23932 / Pf-5).